A 228-amino-acid chain; its full sequence is Gliolectin (228 aa).

Over 1-120 (MLCPPMALGP…NPKAVSQAPR (120 aa)) the chain is Cytoplasmic. Residues 121–137 (GMALTPAQISASAKLIL) traverse the membrane as a helical; Signal-anchor for type II membrane protein segment. Residues 138–228 (QKCPESDRKK…GTSELADQKQ (91 aa)) lie on the Extracellular side of the membrane. The tract at residues 141–228 (PESDRKKSNG…GTSELADQKQ (88 aa)) is disordered. 6 N-linked (GlcNAc...) asparagine glycosylation sites follow: N149, N156, N198, N199, N205, and N218. The span at 195–213 (NNNNNSSSSNNNSNMNINN) shows a compositional bias: low complexity. Residues 218–228 (NGTSELADQKQ) are compositionally biased toward polar residues.

As to expression, expressed by a subset of glial cells found at the midline of the embryo stage 12 nervous system. Expression is highest during the formation of the embryonic axonal commissures, a process requiring midline glial cell function (at protein level).

The protein resides in the membrane. Functionally, has a role in intercellular carbohydrate-mediated cell adhesion. The protein is Gliolectin of Drosophila melanogaster (Fruit fly).